A 3391-amino-acid polypeptide reads, in one-letter code: Genome polyprotein (3391 aa).

Positions 1-15 are interaction with host EXOC1; it reads MNNQRKKTARPSFNM. Over 1 to 101 the chain is Cytoplasmic; that stretch reads MNNQRKKTAR…LNIMNRRKRS (101 aa). The segment at 37–72 is hydrophobic; homodimerization of capsid protein C; it reads LLSGQGPMKLVMAFIAFLRFLAIPPTAGILARWGSF. Positions 101–114 are cleaved as a propeptide — ER anchor for the capsid protein C, removed in mature form by serine protease NS3; it reads SVTMLLMLLPTALA. A helical membrane pass occupies residues 102–119; that stretch reads VTMLLMLLPTALAFHLTT. At 120 to 242 the chain is on the extracellular side; the sequence is RGGEPHMIVS…QIQRVETWAL (123 aa). An N-linked (GlcNAc...) asparagine; by host glycan is attached at N183. The chain crosses the membrane as a helical span at residues 243 to 260; that stretch reads RHPGFTVIALFLAHAIGT. Residue S261 is a topological domain, cytoplasmic. Residues 262–280 traverse the membrane as a helical segment; the sequence is ITQKGIIFILLMLVTPSMA. Over 281–725 the chain is Extracellular; the sequence is MRCVGIGSRD…HQVFGTAYGV (445 aa). Intrachain disulfides connect C283/C310, C340/C401, C354/C385, and C372/C396. The N-linked (GlcNAc...) asparagine; by host glycan is linked to N347. The fusion peptide stretch occupies residues 378–391; it reads DRGWGNGCGLFGKG. N-linked (GlcNAc...) asparagine; by host glycosylation occurs at N433. 2 cysteine pairs are disulfide-bonded: C465-C565 and C582-C613. A helical membrane pass occupies residues 726-746; the sequence is LFSGVSWTMKIGIGILLTWLG. The Cytoplasmic segment spans residues 747-752; the sequence is LNSRST. The chain crosses the membrane as a helical span at residues 753–773; sequence SLSMTCIAVGMVTLYLGVMVQ. Over 774–1198 the chain is Extracellular; it reads ADSGCVINWK…NASDRMGMGT (425 aa). 6 disulfides stabilise this stretch: C778–C789, C829–C917, C953–C997, C1054–C1103, C1065–C1087, and C1086–C1090. N-linked (GlcNAc...) asparagine; by host glycans are attached at residues N904 and N981. The N-linked (GlcNAc...) asparagine; by host glycan is linked to N1189. The chain crosses the membrane as a helical span at residues 1199 to 1219; it reads TYLALMATFKMRPMFAVGLLF. Topologically, residues 1220–1225 are cytoplasmic; it reads RRLTSR. The chain crosses the membrane as a helical span at residues 1226 to 1244; sequence EVLLLTIGLSLVASVELPN. Residues 1245 to 1268 lie on the Lumenal side of the membrane; it reads SLEELGDGLAMGIMILKLLTDFQS. Residues 1269–1289 form a helical membrane-spanning segment; sequence HQLWATLLSLTFVKTTFSLHY. A1290 is a topological domain (cytoplasmic). A helical membrane pass occupies residues 1291-1309; that stretch reads WKTMAMVLSIVSLFPLCLS. Residues 1310–1314 are Lumenal-facing; it reads TTSQK. Residues 1315 to 1335 form a helical membrane-spanning segment; sequence TTWLPVLLGSLGCKPLTMFLI. Residues 1336–1345 lie on the Cytoplasmic side of the membrane; that stretch reads AENKIWGRKS. The chain crosses the membrane as a helical span at residues 1346–1366; it reads WPLNEGIMAVGIVSILLSSLL. The Lumenal portion of the chain corresponds to 1367–1369; it reads KND. Residues 1370-1390 form a helical membrane-spanning segment; the sequence is VPLAGPLIAGGMLIACYVISG. Residues 1391–1446 lie on the Cytoplasmic side of the membrane; sequence SSADLSLEKAAEVSWEEEAEHSGASHNILVEVQDDGTMKIKDEERDDTLTILLKAT. The interval 1397 to 1436 is interacts with and activates NS3 protease; it reads LEKAAEVSWEEEAEHSGASHNILVEVQDDGTMKIKDEERD. The segment at residues 1447-1467 is an intramembrane region (helical); it reads LLAVSGVYPLSIPATLFVWYF. Over 1468 to 2147 the chain is Cytoplasmic; sequence WQKKKQRSGV…MEELPDTIET (680 aa). A Peptidase S7 domain is found at 1475-1652; the sequence is SGVLWDTPSP…KASQEGPLPE (178 aa). Catalysis depends on charge relay system; for serine protease NS3 activity residues H1525, D1549, and S1609. In terms of domain architecture, Helicase ATP-binding spans 1655-1811; that stretch reads DEVFRKRNLT…QSNAVIQDEE (157 aa). The tract at residues 1659–1662 is important for RNA-binding; it reads RKRN. 1668 to 1675 serves as a coordination point for ATP; it reads LHPGSGKT. A DEAH box motif is present at residues 1759 to 1762; sequence DEAH. A Helicase C-terminal domain is found at 1821 to 1988; the sequence is SGYEWITDFP…IIPALFEPER (168 aa). K1863 bears the N6-acetyllysine; by host mark. Residues 2148-2168 form a helical membrane-spanning segment; it reads LMLLALIAVLTGGVTLFFLSG. Residues 2169-2170 lie on the Lumenal side of the membrane; sequence KG. Positions 2171 to 2191 form an intramembrane region, helical; sequence LGKTSIGLLCVMASSVLLWMA. S2192 is a topological domain (lumenal). The helical transmembrane segment at 2193–2213 threads the bilayer; sequence VEPHWIAASIILEFFLMVLLI. The Cytoplasmic portion of the chain corresponds to 2214 to 2228; sequence PEPDRQRTPQDNQLA. The chain crosses the membrane as a helical span at residues 2229-2249; it reads YVVIGLLFMILTVAANEMGLL. Residues 2250-2275 are Lumenal-facing; it reads ETTKKDLGIGHVAAENHHHATMLDVD. An intramembrane region (helical) is located at residues 2276–2296; that stretch reads LRPASAWTLYAVATTVITPMM. Over 2297–2348 the chain is Lumenal; that stretch reads RHTIENTTANISLTAIANQAAILMGLDKGWPISKMDIGVPLLALGCYSQVNP. Residues N2302 and N2306 are each glycosylated (N-linked (GlcNAc...) asparagine; by host). The chain crosses the membrane as a helical span at residues 2349-2369; sequence LTLTAAVLMLVAHYAIIGPGL. Over 2370 to 2414 the chain is Cytoplasmic; the sequence is QAKATREAQKRTAAGIMKNPTVDGIVAIDLDPVVYDAKFEKQLGQ. Residues 2415-2435 traverse the membrane as a helical segment; the sequence is IMLLILCTSQILLMRTTWALC. Topologically, residues 2436–2460 are lumenal; the sequence is ESITLATGPLTTLWEGSPGKFWNTT. N2458 carries N-linked (GlcNAc...) asparagine; by host glycosylation. A helical membrane pass occupies residues 2461–2481; the sequence is IAVSMANIFRGSYLAGAGLAF. The Cytoplasmic portion of the chain corresponds to 2482–3391; sequence SLMKSLGGGR…NESDPEGALW (910 aa). One can recognise an mRNA cap 0-1 NS5-type MT domain in the interval 2494-2755; sequence TGAKGKHWER…DVDLGAGTRH (262 aa). Residue S2548 participates in S-adenosyl-L-methionine binding. S2548 is subject to Phosphoserine. The active-site For 2'-O-MTase activity is the K2553. Positions 2569–2572 match the SUMO-interacting motif motif; sequence VIDL. The S-adenosyl-L-methionine site is built by G2578, W2579, T2596, K2597, D2623, and V2624. The active-site For 2'-O-MTase activity is the D2638. I2639 is an S-adenosyl-L-methionine binding site. Residues K2672 and E2708 each act as for 2'-O-MTase activity in the active site. Residue Y2710 coordinates S-adenosyl-L-methionine. Zn(2+) is bound by residues E2929, H2933, C2938, and C2941. Residues 3019–3168 enclose the RdRp catalytic domain; the sequence is GNMYADDTAG…KPIDDRFATA (150 aa). Zn(2+)-binding residues include H3203, C3219, and C3338.

This sequence in the N-terminal section; belongs to the class I-like SAM-binding methyltransferase superfamily. mRNA cap 0-1 NS5-type methyltransferase family. As to quaternary structure, homodimer. Interacts (via N-terminus) with host EXOC1 (via C-terminus); this interaction results in EXOC1 degradation through the proteasome degradation pathway. In terms of assembly, forms heterodimers with envelope protein E in the endoplasmic reticulum and Golgi. Homodimer; in the endoplasmic reticulum and Golgi. Interacts with protein prM. Interacts with non-structural protein 1. As to quaternary structure, homodimer; Homohexamer when secreted. Interacts with envelope protein E. In terms of assembly, interacts (via N-terminus) with serine protease NS3. Forms a heterodimer with serine protease NS3. May form homooligomers. As to quaternary structure, forms a heterodimer with NS2B. Interacts with NS4B. Interacts with unphosphorylated RNA-directed RNA polymerase NS5; this interaction stimulates RNA-directed RNA polymerase NS5 guanylyltransferase activity. Interacts with host SHFL. In terms of assembly, interacts with host MAVS; this interaction inhibits the synthesis of IFN-beta. Interacts with host SHFL. Interacts with host AUP1; the interaction occurs in the presence of Dengue virus NS4B and induces lipophagy which facilitates production of virus progeny particles. Interacts with serine protease NS3. As to quaternary structure, homodimer. Interacts with host STAT2; this interaction inhibits the phosphorylation of the latter, and, when all viral proteins are present (polyprotein), targets STAT2 for degradation. Interacts with serine protease NS3. In terms of processing, specific enzymatic cleavages in vivo yield mature proteins. Cleavages in the lumen of endoplasmic reticulum are performed by host signal peptidase, whereas cleavages in the cytoplasmic side are performed by serine protease NS3. Signal cleavage at the 2K-4B site requires a prior NS3 protease-mediated cleavage at the 4A-2K site. Cleaved in post-Golgi vesicles by a host furin, releasing the mature small envelope protein M, and peptide pr. This cleavage is incomplete as up to 30% of viral particles still carry uncleaved prM. Post-translationally, N-glycosylated. In terms of processing, N-glycosylated. The excreted form is glycosylated and this is required for efficient secretion of the protein from infected cells. Acetylated by host KAT5. Acetylation modulates NS3 RNA-binding and unwinding activities and plays an important positive role for viral replication. Post-translationally, sumoylation of RNA-directed RNA polymerase NS5 increases NS5 protein stability allowing proper viral RNA replication. In terms of processing, phosphorylated on serines residues. This phosphorylation may trigger NS5 nuclear localization.

It localises to the virion. It is found in the host nucleus. Its subcellular location is the host cytoplasm. The protein resides in the host perinuclear region. The protein localises to the secreted. It localises to the virion membrane. It is found in the host endoplasmic reticulum membrane. Its subcellular location is the host mitochondrion. The enzyme catalyses Selective hydrolysis of -Xaa-Xaa-|-Yaa- bonds in which each of the Xaa can be either Arg or Lys and Yaa can be either Ser or Ala.. The catalysed reaction is RNA(n) + a ribonucleoside 5'-triphosphate = RNA(n+1) + diphosphate. It carries out the reaction a ribonucleoside 5'-triphosphate + H2O = a ribonucleoside 5'-diphosphate + phosphate + H(+). It catalyses the reaction ATP + H2O = ADP + phosphate + H(+). The enzyme catalyses a 5'-end (5'-triphosphoguanosine)-ribonucleoside in mRNA + S-adenosyl-L-methionine = a 5'-end (N(7)-methyl 5'-triphosphoguanosine)-ribonucleoside in mRNA + S-adenosyl-L-homocysteine. The catalysed reaction is a 5'-end (N(7)-methyl 5'-triphosphoguanosine)-ribonucleoside in mRNA + S-adenosyl-L-methionine = a 5'-end (N(7)-methyl 5'-triphosphoguanosine)-(2'-O-methyl-ribonucleoside) in mRNA + S-adenosyl-L-homocysteine + H(+). Plays a role in virus budding by binding to the cell membrane and gathering the viral RNA into a nucleocapsid that forms the core of a mature virus particle. During virus entry, may induce genome penetration into the host cytoplasm after hemifusion induced by the surface proteins. Can migrate to the cell nucleus where it modulates host functions. Overcomes the anti-viral effects of host EXOC1 by sequestering and degrading the latter through the proteasome degradation pathway. Its function is as follows. Inhibits RNA silencing by interfering with host Dicer. In terms of biological role, prevents premature fusion activity of envelope proteins in trans-Golgi by binding to envelope protein E at pH6.0. After virion release in extracellular space, gets dissociated from E dimers. Functionally, acts as a chaperone for envelope protein E during intracellular virion assembly by masking and inactivating envelope protein E fusion peptide. prM is the only viral peptide matured by host furin in the trans-Golgi network probably to avoid catastrophic activation of the viral fusion activity in acidic Golgi compartment prior to virion release. prM-E cleavage is inefficient, and many virions are only partially matured. These uncleaved prM would play a role in immune evasion. May play a role in virus budding. Exerts cytotoxic effects by activating a mitochondrial apoptotic pathway through M ectodomain. May display a viroporin activity. Its function is as follows. Binds to host cell surface receptor and mediates fusion between viral and cellular membranes. Envelope protein is synthesized in the endoplasmic reticulum in the form of heterodimer with protein prM. They play a role in virion budding in the ER, and the newly formed immature particle is covered with 60 spikes composed of heterodimer between precursor prM and envelope protein E. The virion is transported to the Golgi apparatus where the low pH causes dissociation of PrM-E heterodimers and formation of E homodimers. prM-E cleavage is inefficient, and many virions are only partially matured. These uncleaved prM would play a role in immune evasion. In terms of biological role, involved in immune evasion, pathogenesis and viral replication. Once cleaved off the polyprotein, is targeted to three destinations: the viral replication cycle, the plasma membrane and the extracellular compartment. Essential for viral replication. Required for formation of the replication complex and recruitment of other non-structural proteins to the ER-derived membrane structures. Excreted as a hexameric lipoparticle that plays a role against host immune response. Antagonizing the complement function. Binds to the host macrophages and dendritic cells. Inhibits signal transduction originating from Toll-like receptor 3 (TLR3). Functionally, disrupts the host endothelial glycocalyx layer of host pulmonary microvascular endothelial cells, inducing degradation of sialic acid and shedding of heparan sulfate proteoglycans. NS1 induces expression of sialidases, heparanase, and activates cathepsin L, which activates heparanase via enzymatic cleavage. These effects are probably linked to the endothelial hyperpermeability observed in severe dengue disease. Component of the viral RNA replication complex that functions in virion assembly and antagonizes the host immune response. Its function is as follows. Required cofactor for the serine protease function of NS3. May have membrane-destabilizing activity and form viroporins. In terms of biological role, displays three enzymatic activities: serine protease, NTPase and RNA c. NS3 serine protease, in association with NS2B, performs its autocleavage and cleaves the polyprotein at dibasic sites in the cytoplasm: C-prM, NS2A-NS2B, NS2B-NS3, NS3-NS4A, NS4A-2K and NS4B-NS5. NS3 RNA helicase binds RNA and unwinds dsRNA in the 3' to 5' direction. Functionally, regulates the ATPase activity of the NS3 helicase activity. NS4A allows NS3 helicase to conserve energy during unwinding. Plays a role in the inhibition of the host innate immune response. Interacts with host MAVS and thereby prevents the interaction between RIGI and MAVS. In turn, IFN-beta production is impaired. Interacts with host AUP1 which mediates induction of lipophagy in host cells and facilitates production of virus progeny particles. Functions as a signal peptide for NS4B and is required for the interferon antagonism activity of the latter. Its function is as follows. Induces the formation of ER-derived membrane vesicles where the viral replication takes place. Inhibits interferon (IFN)-induced host STAT1 phosphorylation and nuclear translocation, thereby preventing the establishment of cellular antiviral state by blocking the IFN-alpha/beta pathway. In terms of biological role, replicates the viral (+) and (-) RNA genome, and performs the capping of genomes in the cytoplasm. NS5 methylates viral RNA cap at guanine N-7 and ribose 2'-O positions. Besides its role in RNA genome replication, also prevents the establishment of cellular antiviral state by blocking the interferon-alpha/beta (IFN-alpha/beta) signaling pathway. Inhibits host TYK2 and STAT2 phosphorylation, thereby preventing activation of JAK-STAT signaling pathway. The sequence is that of Genome polyprotein from Aedes aegypti (Yellowfever mosquito).